Here is a 223-residue protein sequence, read N- to C-terminus: Golgi SNAP receptor complex member 1 (223 aa).

Residue serine 2 is modified to N-acetylserine. At serine 2–asparagine 204 the chain is on the cytoplasmic side. Serine 164 carries the phosphoserine modification. A helical; Anchor for type IV membrane protein transmembrane segment spans residues alanine 205 to threonine 222. A topological domain (vesicular) is located at residue tryptophan 223.

The protein belongs to the GOSR1 family. In terms of assembly, component of several multiprotein Golgi SNARE complexes. Identified in a Golgi SNARE complex consisting of t-SNARES SED5, YKT6, and the v-SNARE SFT1. Interacts with BET1. Interacts with BOS1. Interacts with SEC22. Interacts with PEP12. Interacts with self.

It is found in the golgi apparatus membrane. Its function is as follows. Involved in transport from the ER to the Golgi apparatus as well as in intra-Golgi transport. It belongs to a super-family of proteins called t-SNAREs or soluble NSF (N-ethylmaleimide-sensitive factor) attachment protein receptor. Rescues alpha-factor maturation defects. The chain is Golgi SNAP receptor complex member 1 (GOS1) from Saccharomyces cerevisiae (strain ATCC 204508 / S288c) (Baker's yeast).